Consider the following 95-residue polypeptide: Integration host factor subunit beta (95 aa).

Belongs to the bacterial histone-like protein family. As to quaternary structure, heterodimer of an alpha and a beta chain.

This protein is one of the two subunits of integration host factor, a specific DNA-binding protein that functions in genetic recombination as well as in transcriptional and translational control. The polypeptide is Integration host factor subunit beta (Erwinia tasmaniensis (strain DSM 17950 / CFBP 7177 / CIP 109463 / NCPPB 4357 / Et1/99)).